A 150-amino-acid polypeptide reads, in one-letter code: Transcription antitermination protein NusB (150 aa).

The protein belongs to the NusB family.

In terms of biological role, involved in transcription antitermination. Required for transcription of ribosomal RNA (rRNA) genes. Binds specifically to the boxA antiterminator sequence of the ribosomal RNA (rrn) operons. In Saccharophagus degradans (strain 2-40 / ATCC 43961 / DSM 17024), this protein is Transcription antitermination protein NusB.